A 217-amino-acid polypeptide reads, in one-letter code: CLA biosynthesis enone reductase (217 aa).

FMN-binding residues include Arg20, Ser22, and Arg24. A 10-oxooctadecanoate-binding site is contributed by Cys51. Asn78 and Gln81 together coordinate FMN. Residue Arg118 coordinates 10-oxooctadecanoate. 4 residues coordinate FMN: Asn165, Ser168, Gly169, and Arg206.

This sequence belongs to the nitroreductase family. In terms of assembly, homodimer. Requires FMN as cofactor.

It catalyses the reaction 10-oxo-(11E)-octadecenoate + NADH + H(+) = 10-oxooctadecanoate + NAD(+). The protein operates within lipid metabolism; fatty acid metabolism. Its function is as follows. Is involved in a saturation metabolic pathway of polyunsaturated fatty acids, that detoxifies unsaturated fatty acids and generates hydroxy fatty acids, oxo fatty acids, conjugated fatty acids such as conjugated linoleic acids (CLAs), and partially saturated trans-fatty acids as intermediates. CLA-ER catalyzes the saturation of the carbon-carbon double bond in 10-oxo-(11E)-octadecenoate to produce 10-oxooctadecanoate, during linoleate metabolism. As part of the gut microbiome, this enzyme modifies host fatty acid composition and is expected to improve human health by altering lipid metabolism related to the onset of metabolic syndrome. In Lactiplantibacillus plantarum (Lactobacillus plantarum), this protein is CLA biosynthesis enone reductase.